Consider the following 209-residue polypeptide: D-aminoacyl-tRNA deacylase 1 (209 aa).

Mg(2+)-binding residues include Val4, Gln6, and Cys28. Positions 139-140 match the Gly-cisPro motif, important for rejection of L-amino acids motif; the sequence is GP. The disordered stretch occupies residues 142–209; it reads TIELESPAPG…EGDVSSEREP (68 aa). Basic and acidic residues-rich tracts occupy residues 159–170 and 181–194; these read QLSKLEKQQQRK and SSKERSAPRKEDRS. Residues Ser197, Ser204, and Ser205 each carry the phosphoserine modification.

It belongs to the DTD family. Homodimer. Interacts with CDC45 and TOPBP1. Preferentially phosphorylated in cells arrested early in S phase. Phosphorylation in the C-terminus weakens the interaction with CDC45.

The protein localises to the nucleus. Its subcellular location is the cytoplasm. It catalyses the reaction glycyl-tRNA(Ala) + H2O = tRNA(Ala) + glycine + H(+). It carries out the reaction a D-aminoacyl-tRNA + H2O = a tRNA + a D-alpha-amino acid + H(+). In terms of biological role, an aminoacyl-tRNA editing enzyme that deacylates mischarged D-aminoacyl-tRNAs. Also deacylates mischarged glycyl-tRNA(Ala), protecting cells against glycine mischarging by AlaRS. Acts via tRNA-based rather than protein-based catalysis; rejects L-amino acids rather than detecting D-amino acids in the active site. By recycling D-aminoacyl-tRNA to D-amino acids and free tRNA molecules, this enzyme counteracts the toxicity associated with the formation of D-aminoacyl-tRNA entities in vivo and helps enforce protein L-homochirality. Functionally, ATPase involved in DNA replication, may facilitate loading of CDC45 onto pre-replication complexes. This chain is D-aminoacyl-tRNA deacylase 1 (DTD1), found in Bos taurus (Bovine).